The chain runs to 258 residues: 3-deoxy-manno-octulosonate cytidylyltransferase (258 aa).

It belongs to the KdsB family.

The protein resides in the cytoplasm. It catalyses the reaction 3-deoxy-alpha-D-manno-oct-2-ulosonate + CTP = CMP-3-deoxy-beta-D-manno-octulosonate + diphosphate. It functions in the pathway nucleotide-sugar biosynthesis; CMP-3-deoxy-D-manno-octulosonate biosynthesis; CMP-3-deoxy-D-manno-octulosonate from 3-deoxy-D-manno-octulosonate and CTP: step 1/1. It participates in bacterial outer membrane biogenesis; lipopolysaccharide biosynthesis. Functionally, activates KDO (a required 8-carbon sugar) for incorporation into bacterial lipopolysaccharide in Gram-negative bacteria. The chain is 3-deoxy-manno-octulosonate cytidylyltransferase from Parvibaculum lavamentivorans (strain DS-1 / DSM 13023 / NCIMB 13966).